The sequence spans 310 residues: p-hydroxybenzoic acid efflux pump subunit AaeA (310 aa).

A helical transmembrane segment spans residues 12–32 (AITVVLVILAFIAIFNAWVYY).

The protein belongs to the membrane fusion protein (MFP) (TC 8.A.1) family.

The protein localises to the cell inner membrane. Its function is as follows. Forms an efflux pump with AaeB. The polypeptide is p-hydroxybenzoic acid efflux pump subunit AaeA (Escherichia coli O127:H6 (strain E2348/69 / EPEC)).